An 867-amino-acid chain; its full sequence is Protein translocase subunit SecA (867 aa).

ATP-binding positions include glutamine 85, 103-107 (GEGKT), and aspartate 491.

This sequence belongs to the SecA family. In terms of assembly, monomer and homodimer. Part of the essential Sec protein translocation apparatus which comprises SecA, SecYEG and auxiliary proteins SecDF. Other proteins may also be involved.

The protein resides in the cell membrane. Its subcellular location is the cytoplasm. The catalysed reaction is ATP + H2O + cellular proteinSide 1 = ADP + phosphate + cellular proteinSide 2.. In terms of biological role, part of the Sec protein translocase complex. Interacts with the SecYEG preprotein conducting channel. Has a central role in coupling the hydrolysis of ATP to the transfer of proteins into and across the cell membrane, serving as an ATP-driven molecular motor driving the stepwise translocation of polypeptide chains across the membrane. This is Protein translocase subunit SecA from Mycoplasmopsis pulmonis (strain UAB CTIP) (Mycoplasma pulmonis).